A 98-amino-acid polypeptide reads, in one-letter code: Putative zinc finger protein ORF98b (98 aa).

Residues 54-77 (GFCPYCHNHYRTFGILANHIMRSH) form a C2H2-type zinc finger.

The chain is Putative zinc finger protein ORF98b from Acidianus convivator (ATV).